A 250-amino-acid polypeptide reads, in one-letter code: Probable transcriptional regulatory protein MAP_1030 (250 aa).

This sequence belongs to the TACO1 family.

The protein localises to the cytoplasm. The polypeptide is Probable transcriptional regulatory protein MAP_1030 (Mycolicibacterium paratuberculosis (strain ATCC BAA-968 / K-10) (Mycobacterium paratuberculosis)).